The chain runs to 601 residues: Glutathione-regulated potassium-efflux system protein KefB (601 aa).

Helical transmembrane passes span 4–24 (ADLL…VPLA), 29–49 (IGAV…GLGF), 55–75 (EILH…GLEL), 87–107 (IFGV…GLLM), 111–131 (FLWQ…TAMA), 152–172 (VLLF…LLAG), 177–197 (HFDW…LIGG), 207–227 (FIAA…LVLS), 230–250 (LFMD…GVLL), 262–282 (AIDP…GMSL), 284–304 (LGVL…LVAI), 324–344 (MQFA…FSTA), and 356–376 (ALLL…MKGI). Positions 400–519 (KPQVIVVGFG…AGVTQFSRET (120 aa)) constitute an RCK N-terminal domain.

The protein belongs to the monovalent cation:proton antiporter 2 (CPA2) transporter (TC 2.A.37) family. KefB subfamily. As to quaternary structure, interacts with the regulatory subunit KefG.

Its subcellular location is the cell inner membrane. In terms of biological role, pore-forming subunit of a potassium efflux system that confers protection against electrophiles. Catalyzes K(+)/H(+) antiport. This Salmonella schwarzengrund (strain CVM19633) protein is Glutathione-regulated potassium-efflux system protein KefB.